A 290-amino-acid chain; its full sequence is Zinc-finger homeodomain protein 2 (290 aa).

The segment covering 1-15 has biased composition (acidic residues); it reads MDFDDHDEGDGDEEM. Positions 1-59 are disordered; sequence MDFDDHDEGDGDEEMPPMPLSSGYDAPMQPGLGGGGGGVPKPGGGVGGGGGGGGGGGGG. Residues 31 to 59 are compositionally biased toward gly residues; it reads GLGGGGGGVPKPGGGVGGGGGGGGGGGGG. The ZF-HD dimerization-type; degenerate zinc-finger motif lies at 63-112; it reads YRECLKNHAVGIGGHAVDGCGEFMASGEEGSIDALRCAACGCHRNFHRKE. The segment at residues 226 to 289 is a DNA-binding region (homeobox); that stretch reads KKRFRTKFTQ…NNKHTLGKKA (64 aa).

Homo- and heterodimer with other ZFHD proteins.

It is found in the nucleus. Its function is as follows. Putative transcription factor. The polypeptide is Zinc-finger homeodomain protein 2 (ZHD2) (Oryza sativa subsp. japonica (Rice)).